Consider the following 224-residue polypeptide: Endonuclease NucS (224 aa).

Belongs to the NucS endonuclease family.

The protein localises to the cytoplasm. Its function is as follows. Cleaves both 3' and 5' ssDNA extremities of branched DNA structures. The chain is Endonuclease NucS from Rhodococcus jostii (strain RHA1).